The sequence spans 150 residues: Lymphotoxin-beta (150 aa).

Residues 1–149 enclose the THD domain; that stretch reads AWITGQGLGW…GKTFFGAVMV (149 aa). N-linked (GlcNAc...) asparagine glycosylation is present at Asn-128.

It belongs to the tumor necrosis factor family. As to quaternary structure, heterotrimer of either two LTB and one LTA subunits or (less prevalent) two LTA and one LTB subunits.

It localises to the membrane. In terms of biological role, cytokine that binds to LTBR/TNFRSF3. May play a specific role in immune response regulation. Provides the membrane anchor for the attachment of the heterotrimeric complex to the cell surface. The protein is Lymphotoxin-beta (LTB) of Sus scrofa (Pig).